Reading from the N-terminus, the 146-residue chain is Large ribosomal subunit protein uL15 (146 aa).

A compositionally biased stretch (basic and acidic residues) spans Met-1–Arg-13. The segment at Met-1 to Arg-60 is disordered. 2 stretches are compositionally biased toward gly residues: residues Arg-21–Ala-31 and Ser-42–Gly-52.

This sequence belongs to the universal ribosomal protein uL15 family. Part of the 50S ribosomal subunit.

Its function is as follows. Binds to the 23S rRNA. This is Large ribosomal subunit protein uL15 from Lysinibacillus sphaericus (strain C3-41).